Here is a 217-residue protein sequence, read N- to C-terminus: GTP cyclohydrolase 1 (217 aa).

Residues Cys-109, His-112, and Cys-180 each contribute to the Zn(2+) site.

The protein belongs to the GTP cyclohydrolase I family. In terms of assembly, homomer.

It carries out the reaction GTP + H2O = 7,8-dihydroneopterin 3'-triphosphate + formate + H(+). The protein operates within cofactor biosynthesis; 7,8-dihydroneopterin triphosphate biosynthesis; 7,8-dihydroneopterin triphosphate from GTP: step 1/1. In Aliivibrio salmonicida (strain LFI1238) (Vibrio salmonicida (strain LFI1238)), this protein is GTP cyclohydrolase 1.